The following is a 961-amino-acid chain: Zinc finger protein basonuclin-1 (961 aa).

A hydrophobic region spans residues 210-219 (MTFMLPFQFF). 2 consecutive C2H2-type zinc fingers follow at residues 325 to 348 (VFCT…NAVH) and 353 to 382 (HKCT…PRLH). Residues 370–393 (RNRHSANPNPRLHMPMNRNNRDKD) are disordered. Positions 501–507 (PKKKSRK) match the Nuclear localization signal motif. A phosphoserine mark is found at Ser-505 and Ser-509. Residues 523 to 572 (EEKRHSLSSDDEVPLQVVSEDEPEDSSPRSDRVPEEQHTQLSLEEPLPQG) form a disordered region. Residues 531-547 (SDDEVPLQVVSEDEPED) show a composition bias toward acidic residues. Basic and acidic residues predominate over residues 548 to 560 (SSPRSDRVPEEQH). 2 consecutive C2H2-type zinc fingers follow at residues 687 to 711 (FQCD…NTHA) and 715 to 743 (HACT…SLHQ). Residues 810–864 (ESYNSGPPSEGTILDLSTTSSMKSESSSHSSWDSDGVSEEGTALMEDSDGNCEGQ) form a disordered region. Over residues 826–844 (STTSSMKSESSSHSSWDSD) the composition is skewed to low complexity. C2H2-type zinc fingers lie at residues 895–918 (ITCH…KTVH) and 923–950 (HKCK…PNLH). Residues 937–961 (VRSRNRHSQNPNLHKSLASSPSHLQ) form a disordered region.

As to quaternary structure, interacts with HSF2BP (via C-terminus). Post-translationally, phosphorylation on Ser-505 and Ser-509 leads to cytoplasmic localization. Epidermis and germ cells of testis and ovary.

The protein localises to the nucleus. The protein resides in the cytoplasm. It localises to the nucleoplasm. Functionally, transcriptional activator. It is likely involved in the regulation of keratinocytes terminal differentiation in squamous epithelia and hair follicles. Required for the maintenance of spermatogenesis. It is involved in the positive regulation of oocyte maturation, probably acting through the control of BMP15 levels and regulation of AKT signaling cascade. May also play a role in the early development of embryos. In Mus musculus (Mouse), this protein is Zinc finger protein basonuclin-1 (Bnc1).